A 530-amino-acid polypeptide reads, in one-letter code: Autoinducer-2 kinase (530 aa).

This sequence belongs to the FGGY kinase family.

Its subcellular location is the cytoplasm. The enzyme catalyses (S)-4,5-dihydroxypentane-2,3-dione + ATP = (2S)-2-hydroxy-3,4-dioxopentyl phosphate + ADP + H(+). Catalyzes the phosphorylation of autoinducer-2 (AI-2) to phospho-AI-2, which subsequently inactivates the transcriptional regulator LsrR and leads to the transcription of the lsr operon. Phosphorylates the ring-open form of (S)-4,5-dihydroxypentane-2,3-dione (DPD), which is the precursor to all AI-2 signaling molecules, at the C5 position. In Salmonella typhimurium (strain LT2 / SGSC1412 / ATCC 700720), this protein is Autoinducer-2 kinase.